A 69-amino-acid polypeptide reads, in one-letter code: MNSANPCCDPITCKPRRGEHCVSGPCCRNCKFLNPGTICKRTMLDGLNDYCTGVTSDCPRNPWKSEEED.

The region spanning 1-66 (MNSANPCCDP…DCPRNPWKSE (66 aa)) is the Disintegrin domain. 4 cysteine pairs are disulfide-bonded: Cys7–Cys30, Cys21–Cys27, Cys26–Cys51, and Cys39–Cys58. Residues 43–45 (MLD) carry the Cell attachment site; atypical (MLD) motif.

The protein belongs to the disintegrin family. Dimeric disintegrin subfamily. As to quaternary structure, heterodimer with VLO5A; disulfide-linked. In terms of tissue distribution, expressed by the venom gland.

Its subcellular location is the secreted. Functionally, poor inhibitor of platelet aggregation. The disintegrin inhibits the adhesion of the alpha-4/beta-1 (ITGA4/ITGB1) integrin to VCAM-1. Inhibition on alpha-2b/beta-3 (ITGA2B/ITGB3) is low. This Macrovipera lebetina obtusa (Levant blunt-nosed viper) protein is Disintegrin VLO5B.